The chain runs to 256 residues: Complex I assembly factor TIMMDC1, mitochondrial (256 aa).

The tract at residues 1–27 is disordered; that stretch reads MAQSDPPKSPDPPLPTSIRNPQTPESG. 2 consecutive transmembrane segments (helical) span residues 111–131 and 159–179; these read WGWR…GLTV and VGLL…GALI.

Belongs to the Tim17/Tim22/Tim23 family. Associates with the intermediate 315 kDa subcomplex of incompletely assembled complex I.

Its subcellular location is the mitochondrion membrane. Its function is as follows. Chaperone protein involved in the assembly of the mitochondrial NADH:ubiquinone oxidoreductase complex (complex I). Participates in constructing the membrane arm of complex I. The chain is Complex I assembly factor TIMMDC1, mitochondrial (timmdc1) from Xenopus laevis (African clawed frog).